A 115-amino-acid polypeptide reads, in one-letter code: Large ribosomal subunit protein uL22c (115 aa).

It belongs to the universal ribosomal protein uL22 family. Part of the 50S ribosomal subunit.

The protein resides in the plastid. The protein localises to the chloroplast. Functionally, this protein binds specifically to 23S rRNA. The globular domain of the protein is located near the polypeptide exit tunnel on the outside of the subunit, while an extended beta-hairpin is found that lines the wall of the exit tunnel in the center of the 70S ribosome. This is Large ribosomal subunit protein uL22c (rpl22) from Thalassiosira pseudonana (Marine diatom).